Here is an 89-residue protein sequence, read N- to C-terminus: uncharacterized protein (89 aa).

This is an uncharacterized protein from Escherichia coli (Bacteriophage T4).